Consider the following 786-residue polypeptide: LPS-assembly protein LptD (786 aa).

Residues 1–24 form the signal peptide; that stretch reads MKKRIPTLLATMIASALYSHQGLA. Disulfide bonds link Cys31–Cys726 and Cys173–Cys727.

Belongs to the LptD family. As to quaternary structure, component of the lipopolysaccharide transport and assembly complex. Interacts with LptE and LptA. In terms of processing, contains two intramolecular disulfide bonds.

It is found in the cell outer membrane. Together with LptE, is involved in the assembly of lipopolysaccharide (LPS) at the surface of the outer membrane. This is LPS-assembly protein LptD from Salmonella choleraesuis (strain SC-B67).